Reading from the N-terminus, the 966-residue chain is Aminopeptidase N (966 aa).

The Cytoplasmic segment spans residues 1-8 (MAKGFYIS). Residues 9–32 (KSLGILGILLGVAALCTIVALSVV) form a helical; Signal-anchor for type II membrane protein membrane-spanning segment. The tract at residues 33-65 (YRQEKNKNTSQSPSMAPLNPTATSSPATTLDQN) is cytosolic Ser/Thr-rich junction. Residues 33–966 (YRQEKNKNTS…VLAWFTANSA (934 aa)) are Extracellular-facing. N-linked (GlcNAc...) asparagine glycosylation is found at Asn40 and Asn125. Residues 40 to 61 (NTSQSPSMAPLNPTATSSPATT) are disordered. Positions 66-966 (LPWNRYRLPK…VLAWFTANSA (901 aa)) are metalloprotease. Residue Tyr173 is modified to Sulfotyrosine. Asn259 and Asn315 each carry an N-linked (GlcNAc...) asparagine glycan. Residue 348 to 352 (GAMEN) participates in substrate binding. His384 lines the Zn(2+) pocket. The Proton acceptor role is filled by Glu385. His388 and Glu407 together coordinate Zn(2+). Residues Tyr415 and Tyr420 each carry the sulfotyrosine modification. Residues Asn552, Asn570, Asn624, and Asn734 are each glycosylated (N-linked (GlcNAc...) asparagine). 2 disulfides stabilise this stretch: Cys760–Cys767 and Cys797–Cys833. Residue Asn817 is glycosylated (N-linked (GlcNAc...) asparagine). Tyr852 carries the phosphotyrosine modification. The residue at position 912 (Tyr912) is a Sulfotyrosine.

It belongs to the peptidase M1 family. In terms of assembly, homodimer. Interacts with SLC6A19. It depends on Zn(2+) as a cofactor. In terms of processing, sulfated. Post-translationally, N- and O-glycosylated. May undergo proteolysis and give rise to a soluble form.

It is found in the cell membrane. It carries out the reaction Release of an N-terminal amino acid, Xaa-|-Yaa- from a peptide, amide or arylamide. Xaa is preferably Ala, but may be most amino acids including Pro (slow action). When a terminal hydrophobic residue is followed by a prolyl residue, the two may be released as an intact Xaa-Pro dipeptide.. Broad specificity aminopeptidase which plays a role in the final digestion of peptides generated from hydrolysis of proteins by gastric and pancreatic proteases. Also involved in the processing of various peptides including peptide hormones, such as angiotensin III and IV, neuropeptides, and chemokines. May also be involved the cleavage of peptides bound to major histocompatibility complex class II molecules of antigen presenting cells. May have a role in angiogenesis and promote cholesterol crystallization. May have a role in amino acid transport by acting as binding partner of amino acid transporter SLC6A19 and regulating its activity. The chain is Aminopeptidase N (ANPEP) from Oryctolagus cuniculus (Rabbit).